We begin with the raw amino-acid sequence, 249 residues long: 2,3-bisphosphoglycerate-dependent phosphoglycerate mutase (249 aa).

Substrate is bound by residues 9 to 16 (RHGQSQWN), 22 to 23 (TG), Arg61, 88 to 91 (ERHY), Lys99, 115 to 116 (RR), and 184 to 185 (GN). The active-site Tele-phosphohistidine intermediate is the His10. Glu88 (proton donor/acceptor) is an active-site residue.

The protein belongs to the phosphoglycerate mutase family. BPG-dependent PGAM subfamily. As to quaternary structure, homodimer.

It catalyses the reaction (2R)-2-phosphoglycerate = (2R)-3-phosphoglycerate. It participates in carbohydrate degradation; glycolysis; pyruvate from D-glyceraldehyde 3-phosphate: step 3/5. Functionally, catalyzes the interconversion of 2-phosphoglycerate and 3-phosphoglycerate. This is 2,3-bisphosphoglycerate-dependent phosphoglycerate mutase from Xanthomonas campestris pv. campestris (strain 8004).